Reading from the N-terminus, the 389-residue chain is Succinate--CoA ligase [ADP-forming] subunit beta (389 aa).

Positions lysine 9 to histidine 244 constitute an ATP-grasp domain. Residues lysine 46, glycine 53–glycine 55, glutamate 99, threonine 102, and glutamate 107 each bind ATP. Mg(2+) is bound by residues asparagine 199 and aspartate 213. Substrate contacts are provided by residues asparagine 264 and glycine 321–valine 323.

The protein belongs to the succinate/malate CoA ligase beta subunit family. In terms of assembly, heterotetramer of two alpha and two beta subunits. Mg(2+) is required as a cofactor.

It carries out the reaction succinate + ATP + CoA = succinyl-CoA + ADP + phosphate. It catalyses the reaction GTP + succinate + CoA = succinyl-CoA + GDP + phosphate. The protein operates within carbohydrate metabolism; tricarboxylic acid cycle; succinate from succinyl-CoA (ligase route): step 1/1. Succinyl-CoA synthetase functions in the citric acid cycle (TCA), coupling the hydrolysis of succinyl-CoA to the synthesis of either ATP or GTP and thus represents the only step of substrate-level phosphorylation in the TCA. The beta subunit provides nucleotide specificity of the enzyme and binds the substrate succinate, while the binding sites for coenzyme A and phosphate are found in the alpha subunit. The sequence is that of Succinate--CoA ligase [ADP-forming] subunit beta from Teredinibacter turnerae (strain ATCC 39867 / T7901).